The following is a 320-amino-acid chain: Esterase LipI (320 aa).

Active-site residues include S165, D261, and H291.

It belongs to the 'GDXG' lipolytic enzyme family.

The enzyme catalyses a fatty acid ester + H2O = an aliphatic alcohol + a fatty acid + H(+). It carries out the reaction a butanoate ester + H2O = an aliphatic alcohol + butanoate + H(+). The catalysed reaction is an octanoate ester + H2O = an aliphatic alcohol + octanoate + H(+). It catalyses the reaction decanoate ester + H2O = decanoate + an aliphatic alcohol + H(+). The enzyme catalyses an acetyl ester + H2O = an aliphatic alcohol + acetate + H(+). It carries out the reaction a dodecanoate ester + H2O = an aliphatic alcohol + dodecanoate + H(+). Inhibited by ionic detergents SDS (anions) and CTAB (cationic). Strongly inhibited by Zn(2+). Esterase that can hydrolyze short-chain esters with the carbon chain containing 2 to 12 carbon atoms. In vitro, pNP-butyrate is the preferred substrate. The protein is Esterase LipI of Mycobacterium tuberculosis (strain ATCC 25618 / H37Rv).